A 156-amino-acid chain; its full sequence is uncharacterized protein (156 aa).

Disordered regions lie at residues 22–64 (KERV…VLKK) and 81–156 (AARA…DENE). Positions 43–56 (PEEDGDHSDKEDEQ) are enriched in acidic residues. A Phosphoserine modification is found at serine 50. The residue at position 108 (lysine 108) is an N6-acetyllysine. Residues 121–134 (TKEEDEINKQDSVK) show a composition bias toward basic and acidic residues. Serine 148 is subject to Phosphoserine.

This is an uncharacterized protein from Bos taurus (Bovine).